The chain runs to 312 residues: Epoxyqueuosine reductase (312 aa).

The active-site Proton donor is aspartate 132. Residues 174–206 (EVLEADKPSKPICGECEKCIEACPTKAIEEPFI) form the 4Fe-4S ferredoxin-type 1 domain. [4Fe-4S] cluster is bound by residues cysteine 186, cysteine 189, cysteine 192, cysteine 196, cysteine 212, cysteine 240, cysteine 243, and cysteine 247. Residues 226–257 (PENIINKMGNWIAGCDICQDVCPWNQKHIPST) enclose the 4Fe-4S ferredoxin-type 2 domain.

It belongs to the QueG family. Monomer. Requires cob(II)alamin as cofactor. The cofactor is [4Fe-4S] cluster.

The protein localises to the cytoplasm. It carries out the reaction epoxyqueuosine(34) in tRNA + AH2 = queuosine(34) in tRNA + A + H2O. The protein operates within tRNA modification; tRNA-queuosine biosynthesis. Functionally, catalyzes the conversion of epoxyqueuosine (oQ) to queuosine (Q), which is a hypermodified base found in the wobble positions of tRNA(Asp), tRNA(Asn), tRNA(His) and tRNA(Tyr). The sequence is that of Epoxyqueuosine reductase from Prochlorococcus marinus (strain NATL2A).